The following is a 212-amino-acid chain: Ras-related protein Rab-21 (212 aa).

Residues Gly-14–Thr-21, Asp-62–Gln-66, and Asn-120–Asp-123 each bind GTP. Residues Thr-181–Asn-212 form a disordered region. Positions Asp-201–Asn-212 are enriched in polar residues. 2 S-geranylgeranyl cysteine lipidation sites follow: Cys-209 and Cys-210.

Belongs to the small GTPase superfamily. Rab family. As to quaternary structure, interacts with LIM domain proteins limF and ChLim.

It is found in the cell membrane. Involved in the regulation of phagocytosis. The chain is Ras-related protein Rab-21 (rab21) from Dictyostelium discoideum (Social amoeba).